A 235-amino-acid polypeptide reads, in one-letter code: ATP-dependent Clp protease proteolytic subunit (235 aa).

The active-site Nucleophile is the Ser-123. Residue His-148 is part of the active site.

This sequence belongs to the peptidase S14 family. Fourteen ClpP subunits assemble into 2 heptameric rings which stack back to back to give a disk-like structure with a central cavity, resembling the structure of eukaryotic proteasomes.

It is found in the cytoplasm. It catalyses the reaction Hydrolysis of proteins to small peptides in the presence of ATP and magnesium. alpha-casein is the usual test substrate. In the absence of ATP, only oligopeptides shorter than five residues are hydrolyzed (such as succinyl-Leu-Tyr-|-NHMec, and Leu-Tyr-Leu-|-Tyr-Trp, in which cleavage of the -Tyr-|-Leu- and -Tyr-|-Trp bonds also occurs).. In terms of biological role, cleaves peptides in various proteins in a process that requires ATP hydrolysis. Has a chymotrypsin-like activity. Plays a major role in the degradation of misfolded proteins. This is ATP-dependent Clp protease proteolytic subunit from Novosphingobium aromaticivorans (strain ATCC 700278 / DSM 12444 / CCUG 56034 / CIP 105152 / NBRC 16084 / F199).